Here is a 285-residue protein sequence, read N- to C-terminus: Catechol-2,3-dioxygenase (285 aa).

VOC domains are found at residues 9 to 126 (HIGY…MYAD) and 169 to 285 (IIGH…TFVI). 2 residues coordinate Fe cation: H213 and E264.

Belongs to the extradiol ring-cleavage dioxygenase family. Requires Fe(2+) as cofactor.

The enzyme catalyses catechol + O2 = (2Z,4E)-2-hydroxy-6-oxohexa-2,4-dienoate + H(+). In terms of biological role, involved in the meta cleavage of catechol to 2-hydroxymuconic semialdehyde. Essential for growth and viability in the presence of catechol and probably involved in the detoxification of catechol. This chain is Catechol-2,3-dioxygenase (catE), found in Bacillus subtilis (strain 168).